We begin with the raw amino-acid sequence, 160 residues long: D-aminoacyl-tRNA deacylase 2 (160 aa).

The Gly-transPro motif, allows the protein to recognize chirality of D-amino acids motif lies at 152 to 153; that stretch reads GP.

Belongs to the DTD family. In terms of assembly, homodimer.

The protein localises to the cytoplasm. The enzyme catalyses a D-aminoacyl-tRNA + H2O = a tRNA + a D-alpha-amino acid + H(+). It carries out the reaction glycyl-tRNA(Ala) + H2O = tRNA(Ala) + glycine + H(+). The catalysed reaction is D-tyrosyl-tRNA(Tyr) + H2O = D-tyrosine + tRNA(Tyr). It catalyses the reaction L-alanyl-tRNA(Thr) + H2O = tRNA(Thr) + L-alanine + H(+). Deacylates mischarged D-aminoacyl-tRNAs. Also deacylates mischarged glycyl-tRNA(Ala), protecting cells against glycine mischarging by AlaRS. Probably acts by rejecting L-amino acids from its binding site rather than specific recognition of D-amino acids. Catalyzes the hydrolysis of D-tyrosyl-tRNA(Tyr), has no activity on correctly charged L-tyrosyl-tRNA(Tyr). By recycling D-aminoacyl-tRNA to D-amino acids and free tRNA molecules, this enzyme counteracts the toxicity associated with the formation of D-aminoacyl-tRNA entities in vivo and helps enforce protein L-homochirality. In contrast to DTD1, deacylates L-Ala mischarged on tRNA(Thr)(G4.U69) by alanine-tRNA ligase AARS. Can deacylate L-Ala due to a relaxed specificity for substrate chirality caused by the trans conformation of the Gly-Pro motif in the active site. Also hydrolyzes correctly charged, achiral, glycyl-tRNA(Gly) in vitro, although in vivo eef1a1a/EF-Tu may protect cognate achiral glycyl-tRNA(Gly) from DTD2-mediated deacetylation. This chain is D-aminoacyl-tRNA deacylase 2 (dtd2), found in Danio rerio (Zebrafish).